A 368-amino-acid polypeptide reads, in one-letter code: Agmatine deiminase (368 aa).

Cys357 functions as the Amidino-cysteine intermediate in the catalytic mechanism.

It belongs to the agmatine deiminase family. In terms of assembly, homodimer.

It catalyses the reaction agmatine + H2O = N-carbamoylputrescine + NH4(+). It functions in the pathway amine and polyamine biosynthesis; putrescine biosynthesis via agmatine pathway; N-carbamoylputrescine from agmatine: step 1/1. Its function is as follows. Mediates the hydrolysis of agmatine into N-carbamoylputrescine in the arginine decarboxylase (ADC) pathway of putrescine biosynthesis, a basic polyamine. This Ectopseudomonas mendocina (strain ymp) (Pseudomonas mendocina) protein is Agmatine deiminase.